Reading from the N-terminus, the 262-residue chain is Tropinone reductase homolog At2g29290 (262 aa).

Residue Leu-13 to His-37 participates in NADP(+) binding. Substrate is bound at residue Ser-146. Tyr-159 functions as the Proton acceptor in the catalytic mechanism.

This sequence belongs to the short-chain dehydrogenases/reductases (SDR) family. SDR65C subfamily.

The protein is Tropinone reductase homolog At2g29290 of Arabidopsis thaliana (Mouse-ear cress).